The primary structure comprises 623 residues: ATP-dependent lipid A-core flippase (623 aa).

The next 5 membrane-spanning stretches (helical) occupy residues Leu-66–Ile-86, Val-103–Phe-123, Leu-190–Ile-210, Leu-290–Leu-310, and Ala-317–Ile-337. The ABC transmembrane type-1 domain maps to Val-67–Lys-349. Positions Val-382 to Met-618 constitute an ABC transporter domain. Gly-416–Thr-423 contacts ATP.

This sequence belongs to the ABC transporter superfamily. Lipid exporter (TC 3.A.1.106) family. Homodimer.

The protein localises to the cell inner membrane. It carries out the reaction ATP + H2O + lipid A-core oligosaccharideSide 1 = ADP + phosphate + lipid A-core oligosaccharideSide 2.. Its function is as follows. Involved in lipopolysaccharide (LPS) biosynthesis. Translocates lipid A-core from the inner to the outer leaflet of the inner membrane. Transmembrane domains (TMD) form a pore in the inner membrane and the ATP-binding domain (NBD) is responsible for energy generation. The protein is ATP-dependent lipid A-core flippase of Bordetella pertussis (strain Tohama I / ATCC BAA-589 / NCTC 13251).